Consider the following 424-residue polypeptide: Vasopressin V1a receptor (424 aa).

A disordered region spans residues M1–S40. Topologically, residues M1–K52 are extracellular. The segment covering D9–Q30 has biased composition (polar residues). N27 carries an N-linked (GlcNAc...) asparagine glycan. A helical transmembrane segment spans residues L53–L76. Residues H77–L88 are Cytoplasmic-facing. The helical transmembrane segment at F89–C110 threads the bilayer. At W111–R125 the chain is on the extracellular side. C124 and C205 are oxidised to a cystine. Residues V126 to A147 form a helical membrane-spanning segment. Topologically, residues D148–R168 are cytoplasmic. Residues L169–S190 form a helical membrane-spanning segment. The Extracellular portion of the chain corresponds to V191 to T220. The chain crosses the membrane as a helical span at residues W221–I241. Over C242–T299 the chain is Cytoplasmic. The chain crosses the membrane as a helical span at residues F300–W319. Over S320–T337 the chain is Extracellular. Residues I338–F357 form a helical membrane-spanning segment. The Cytoplasmic portion of the chain corresponds to S358 to T424. Residues C371 and C372 are each lipidated (S-palmitoyl cysteine). The tract at residues D383 to S416 is disordered. A compositionally biased stretch (polar residues) spans R389–G405. Position 410 is a phosphoserine (S410).

The protein belongs to the G-protein coupled receptor 1 family. Vasopressin/oxytocin receptor subfamily. In terms of processing, palmitoylated on three cysteine residues, of which only two are identified. Localized within gonadotropes of the anterior pituitary of the brain. Broadly distributed throughout the cerebral cortex.

Its subcellular location is the cell membrane. It is found in the cytoplasmic vesicle membrane. Functionally, receptor for arginine vasopressin. The activity of this receptor is mediated by G proteins which activate a phosphatidyl-inositol-calcium second messenger system. Involved in social memory formation. The sequence is that of Vasopressin V1a receptor (Avpr1a) from Rattus norvegicus (Rat).